The primary structure comprises 100 residues: Small ribosomal subunit protein uS14c (100 aa).

This sequence belongs to the universal ribosomal protein uS14 family. In terms of assembly, part of the 30S ribosomal subunit.

It is found in the plastid. It localises to the chloroplast. Its function is as follows. Binds 16S rRNA, required for the assembly of 30S particles. This is Small ribosomal subunit protein uS14c from Cyanidioschyzon merolae (strain NIES-3377 / 10D) (Unicellular red alga).